We begin with the raw amino-acid sequence, 247 residues long: Protein NipSnap homolog 3A (247 aa).

2 positions are modified to N6-acetyllysine: Lys-48 and Lys-166.

The protein belongs to the NipSnap family.

Its subcellular location is the cytoplasm. It localises to the cytosol. The chain is Protein NipSnap homolog 3A (NIPSNAP3A) from Pongo abelii (Sumatran orangutan).